Consider the following 217-residue polypeptide: Imidazole glycerol phosphate synthase subunit HisH (217 aa).

The 209-residue stretch at 6 to 214 (QIAVVDYDMG…VTQVAAAQLQ (209 aa)) folds into the Glutamine amidotransferase type-1 domain. Residue Cys84 is the Nucleophile of the active site. Residues His189 and Glu191 contribute to the active site.

Heterodimer of HisH and HisF.

It is found in the cytoplasm. It catalyses the reaction 5-[(5-phospho-1-deoxy-D-ribulos-1-ylimino)methylamino]-1-(5-phospho-beta-D-ribosyl)imidazole-4-carboxamide + L-glutamine = D-erythro-1-(imidazol-4-yl)glycerol 3-phosphate + 5-amino-1-(5-phospho-beta-D-ribosyl)imidazole-4-carboxamide + L-glutamate + H(+). The catalysed reaction is L-glutamine + H2O = L-glutamate + NH4(+). It participates in amino-acid biosynthesis; L-histidine biosynthesis; L-histidine from 5-phospho-alpha-D-ribose 1-diphosphate: step 5/9. Functionally, IGPS catalyzes the conversion of PRFAR and glutamine to IGP, AICAR and glutamate. The HisH subunit catalyzes the hydrolysis of glutamine to glutamate and ammonia as part of the synthesis of IGP and AICAR. The resulting ammonia molecule is channeled to the active site of HisF. The polypeptide is Imidazole glycerol phosphate synthase subunit HisH (Synechococcus sp. (strain ATCC 27144 / PCC 6301 / SAUG 1402/1) (Anacystis nidulans)).